A 665-amino-acid polypeptide reads, in one-letter code: DNA mismatch repair protein MutL (665 aa).

Belongs to the DNA mismatch repair MutL/HexB family.

Its function is as follows. This protein is involved in the repair of mismatches in DNA. It is required for dam-dependent methyl-directed DNA mismatch repair. May act as a 'molecular matchmaker', a protein that promotes the formation of a stable complex between two or more DNA-binding proteins in an ATP-dependent manner without itself being part of a final effector complex. This chain is DNA mismatch repair protein MutL, found in Acidobacterium capsulatum (strain ATCC 51196 / DSM 11244 / BCRC 80197 / JCM 7670 / NBRC 15755 / NCIMB 13165 / 161).